A 379-amino-acid chain; its full sequence is Alanine racemase (379 aa).

The active-site Proton acceptor; specific for D-alanine is Lys37. Lys37 is subject to N6-(pyridoxal phosphate)lysine. Residue Arg139 coordinates substrate. Tyr266 acts as the Proton acceptor; specific for L-alanine in catalysis. Residue Met314 participates in substrate binding.

This sequence belongs to the alanine racemase family. The cofactor is pyridoxal 5'-phosphate.

The catalysed reaction is L-alanine = D-alanine. It participates in amino-acid biosynthesis; D-alanine biosynthesis; D-alanine from L-alanine: step 1/1. Functionally, catalyzes the interconversion of L-alanine and D-alanine. May also act on other amino acids. The polypeptide is Alanine racemase (alr) (Sorangium cellulosum (strain So ce56) (Polyangium cellulosum (strain So ce56))).